Consider the following 569-residue polypeptide: Peroxynitrite isomerase THAP4 (569 aa).

The THAP-type zinc finger occupies 1–85 (MVICCAAVNC…LKPTAVPSIF (85 aa)). The interval 83-219 (SIFHLSEKKR…GISMDDFTPP (137 aa)) is disordered. The span at 121-130 (IGSSLSSSDN) shows a compositional bias: polar residues. At Ser-159 the chain carries Phosphoserine. Over residues 196 to 210 (ASSSAADAGGADKSG) the composition is skewed to low complexity. The short motif at 230-233 (LHSY) is the HCFC1-binding motif (HBM) element. Ser-234 is modified (phosphoserine). Positions 235-312 (FSSKHTRERP…EAVQSEHSDA (78 aa)) are disordered. Basic and acidic residues predominate over residues 242–262 (ERPSVPREPMDRKRLKRDIEP). A compositionally biased stretch (polar residues) spans 265–279 (SGNSVAQSPPSSSLT). A compositionally biased stretch (low complexity) spans 280–289 (ATPQKASQSP). Positions 407–569 (PPKLNPVVEP…LHITYKKVTP (163 aa)) are nitrobindin. Heme b is bound by residues Thr-436 and His-559.

The protein in the C-terminal section; belongs to the nitrobindin family. As to quaternary structure, homodimer. The cofactor is heme b.

It localises to the cytoplasm. The protein resides in the nucleus. The catalysed reaction is peroxynitrite = nitrate. It participates in nitrogen metabolism. Its function is as follows. Heme-binding protein able to scavenge peroxynitrite and to protect free L-tyrosine against peroxynitrite-mediated nitration, by acting as a peroxynitrite isomerase that converts peroxynitrite to nitrate. Therefore, this protein likely plays a role in peroxynitrite sensing and in the detoxification of reactive nitrogen and oxygen species (RNS and ROS, respectively). Is able to bind nitric oxide (NO) in vitro, but may act as a sensor of peroxynitrite levels in vivo, possibly modulating the transcriptional activity residing in the N-terminal region. The chain is Peroxynitrite isomerase THAP4 from Rattus norvegicus (Rat).